Consider the following 1051-residue polypeptide: Putative transcription factor SEF1 (1051 aa).

The segment covering 1-10 (MSTDVSERGA) has biased composition (basic and acidic residues). Disordered regions lie at residues 1 to 54 (MSTD…SEES) and 67 to 90 (GQASPDRSKVSKQQNGASGHRPVT). Over residues 11–21 (EAGSSSGLLSS) the composition is skewed to low complexity. The zn(2)-C6 fungal-type DNA-binding region spans 92–122 (CTHCRQHKIKCNASENFPSSCSRCERMGLQC). Residues 206–218 (SSVKSSVNTPSGS) show a composition bias toward low complexity. 3 disordered regions span residues 206-227 (SSVKSSVNTPSGSYSASAVDVS), 738-759 (EKNRKEQPVHTAATGSQDTEKR), and 927-968 (ASGN…QPAP).

It is found in the nucleus. Functionally, putative transcription factor. This chain is Putative transcription factor SEF1 (SEF1), found in Eremothecium gossypii (strain ATCC 10895 / CBS 109.51 / FGSC 9923 / NRRL Y-1056) (Yeast).